A 283-amino-acid polypeptide reads, in one-letter code: HTH-type transcriptional activator RhaR (283 aa).

The HTH araC/xylS-type domain occupies 179–277 (DLLMAALGNS…GVTPRVWRQQ (99 aa)). 2 DNA-binding regions (H-T-H motif) span residues 196 to 217 (QHFC…RQQT) and 244 to 267 (ISEI…TRET).

As to quaternary structure, binds DNA as a dimer.

The protein localises to the cytoplasm. Its function is as follows. Activates expression of the rhaSR operon in response to L-rhamnose. The protein is HTH-type transcriptional activator RhaR of Cronobacter sakazakii (strain ATCC BAA-894) (Enterobacter sakazakii).